A 123-amino-acid polypeptide reads, in one-letter code: SOSS complex subunit C homolog (123 aa).

It belongs to the SOSS-C family.

The protein is SOSS complex subunit C homolog of Drosophila ananassae (Fruit fly).